Consider the following 29-residue polypeptide: GLWETIKNFGKKFTLNILHNLKCKIGGGC.

Cysteines 23 and 29 form a disulfide.

The protein belongs to the frog skin active peptide (FSAP) family. Brevinin subfamily. In terms of tissue distribution, expressed by the skin glands.

It localises to the secreted. Antibacterial activity against representative Gram-negative and Gram-positive bacteria. This Rana temporaria (European common frog) protein is Brevinin-2Td.